Here is a 140-residue protein sequence, read N- to C-terminus: Relaxin-3 (140 aa).

Positions 1 to 23 (MATRGLLLASWALLGALVLQAEA) are cleaved as a signal peptide. 3 disulfide bridges follow: C33/C127, C45/C140, and C126/C131. Residues 53 to 116 (ADILAHDPLG…GSPGVVRGSR (64 aa)) constitute a propeptide, connecting peptide.

Belongs to the insulin family. As to quaternary structure, heterodimer of a B chain and an A chain linked by two disulfide bonds. Highly abundant expression is detected in neurons within the ventomedial dorsal tegmental nucleus and the laterally central gray alpha of the pons. Also detected at much lower levels within the hippocampus.

Its subcellular location is the secreted. Its function is as follows. May play a role in neuropeptide signaling processes. Ligand for LGR7, relaxin-3 receptor-1 and relaxin-3 receptor-2. This Rattus norvegicus (Rat) protein is Relaxin-3 (Rln3).